We begin with the raw amino-acid sequence, 292 residues long: Ribonuclease HIII (292 aa).

The RNase H type-2 domain maps to 76-292 (TNLIGTDEVG…TQKAIKIAQL (217 aa)). A divalent metal cation is bound by residues aspartate 82, glutamate 83, and aspartate 186.

The protein belongs to the RNase HII family. RnhC subfamily. The cofactor is Mn(2+). Mg(2+) serves as cofactor.

Its subcellular location is the cytoplasm. The enzyme catalyses Endonucleolytic cleavage to 5'-phosphomonoester.. Endonuclease that specifically degrades the RNA of RNA-DNA hybrids. The sequence is that of Ribonuclease HIII from Lactococcus lactis subsp. lactis (strain IL1403) (Streptococcus lactis).